The primary structure comprises 853 residues: Envelope glycoprotein gp160 (853 aa).

Residues 1 to 31 form the signal peptide; the sequence is MRARGIERNCQNWWKWGIMLLGILMTCSAAD. Topologically, residues 32 to 681 are extracellular; the sequence is NLWVTVYYGV…ITQWLWYIKI (650 aa). Residues Cys53 and Cys73 are joined by a disulfide bond. 14 N-linked (GlcNAc...) asparagine; by host glycosylation sites follow: Asn87, Asn129, Asn137, Asn143, Asn153, Asn157, Asn183, Asn188, Asn198, Asn235, Asn242, Asn263, Asn277, and Asn290. 5 cysteine pairs are disulfide-bonded: Cys118/Cys206, Cys125/Cys197, Cys130/Cys154, Cys219/Cys248, and Cys229/Cys240. The V1 stretch occupies residues 130 to 153; the sequence is CSDELRNNGTMGNNVTTEEKGMKN. Residues 154–197 are V2; sequence CSFNVTTVLKDKKQQVYALFYRLDIVPIDNDSSTNSTNYRLINC. A V3 region spans residues 297–329; that stretch reads CARPYQNTRQRTPIGLGQSLYTTRSRSIIGQAH. Cys297 and Cys330 are joined by a disulfide. Asn331 and Asn353 each carry an N-linked (GlcNAc...) asparagine; by host glycan. The CD4-binding loop stretch occupies residues 362 to 372; that stretch reads SSGGDPEITTH. Intrachain disulfides connect Cys376–Cys442 and Cys383–Cys416. The interval 383–416 is V4; it reads CNTSGLFNSTWNISAWNNITESNNSTNTNITLQC. N-linked (GlcNAc...) asparagine; by host glycans are attached at residues Asn384, Asn390, Asn394, Asn400, Asn405, Asn406, Asn411, Asn445, Asn458, Asn459, and Asn462. 2 V5 regions span residues 457-468 and 460-468; these read INNSTNETFRPG and STNETFRPG. Residues 509 to 529 form a fusion peptide region; that stretch reads AIGLGAMFLGFLGAAGSTMGA. The segment at 571–589 is immunosuppression; the sequence is KQLQARILAVERYLKDQQL. A disulfide bond links Cys595 and Cys601. Residues Asn608, Asn613, Asn622, and Asn634 are each glycosylated (N-linked (GlcNAc...) asparagine; by host). Residues 630-664 are a coiled coil; the sequence is REIDNYTGLIYSLIEESQTQQEKNEKELLELDKWA. Positions 659–680 are MPER; binding to GalCer; sequence ELDKWASLWNWFSITQWLWYIK. A helical transmembrane segment spans residues 682 to 702; that stretch reads FIMIIGGLIGLRIVFAVLSLV. Residues 703 to 853 are Cytoplasmic-facing; that stretch reads NRVRQGYSPL…IRQGLERSLL (151 aa). The short motif at 709 to 712 is the YXXL motif; contains endocytosis signal element; sequence YSPL. Positions 716–738 are disordered; it reads TLLPAPRGPDRPEGTEEEGGERG. Positions 723 to 738 are enriched in basic and acidic residues; it reads GPDRPEGTEEEGGERG. S-palmitoyl cysteine; by host attachment occurs at residues Cys761 and Cys834. Residues 852–853 carry the Di-leucine internalization motif motif; the sequence is LL.

Belongs to the HIV-1 env protein family. The mature envelope protein (Env) consists of a homotrimer of non-covalently associated gp120-gp41 heterodimers. The resulting complex protrudes from the virus surface as a spike. There seems to be as few as 10 spikes on the average virion. Interacts with host CD4, CCR5 and CXCR4. Gp120 also interacts with the C-type lectins CD209/DC-SIGN and CLEC4M/DC-SIGNR (collectively referred to as DC-SIGN(R)). Gp120 and gp41 interact with GalCer. Gp120 interacts with host ITGA4/ITGB7 complex; on CD4+ T-cells, this interaction results in rapid activation of integrin ITGAL/LFA-1, which facilitates efficient cell-to-cell spreading of HIV-1. Gp120 interacts with cell-associated heparan sulfate; this interaction increases virus infectivity on permissive cells and may be involved in infection of CD4- cells. In terms of assembly, the mature envelope protein (Env) consists of a homotrimer of non-covalently associated gp120-gp41 heterodimers. The resulting complex protrudes from the virus surface as a spike. There seems to be as few as 10 spikes on the average virion. Highly glycosylated by host. The high number of glycan on the protein is reffered to as 'glycan shield' because it contributes to hide protein sequence from adaptive immune system. In terms of processing, palmitoylation of the transmembrane protein and of Env polyprotein (prior to its proteolytic cleavage) is essential for their association with host cell membrane lipid rafts. Palmitoylation is therefore required for envelope trafficking to classical lipid rafts, but not for viral replication. Post-translationally, specific enzymatic cleavages in vivo yield mature proteins. Envelope glycoproteins are synthesized as an inactive precursor that is heavily N-glycosylated and processed likely by host cell furin in the Golgi to yield the mature SU and TM proteins. The cleavage site between SU and TM requires the minimal sequence [KR]-X-[KR]-R. About 2 of the 9 disulfide bonds of gp41 are reduced by P4HB/PDI, following binding to CD4 receptor.

The protein resides in the virion membrane. The protein localises to the host cell membrane. Its subcellular location is the host endosome membrane. Its function is as follows. Oligomerizes in the host endoplasmic reticulum into predominantly trimers. In a second time, gp160 transits in the host Golgi, where glycosylation is completed. The precursor is then proteolytically cleaved in the trans-Golgi and thereby activated by cellular furin or furin-like proteases to produce gp120 and gp41. In terms of biological role, attaches the virus to the host lymphoid cell by binding to the primary receptor CD4. This interaction induces a structural rearrangement creating a high affinity binding site for a chemokine coreceptor like CXCR4 and/or CCR5. Acts as a ligand for CD209/DC-SIGN and CLEC4M/DC-SIGNR, which are respectively found on dendritic cells (DCs), and on endothelial cells of liver sinusoids and lymph node sinuses. These interactions allow capture of viral particles at mucosal surfaces by these cells and subsequent transmission to permissive cells. HIV subverts the migration properties of dendritic cells to gain access to CD4+ T-cells in lymph nodes. Virus transmission to permissive T-cells occurs either in trans (without DCs infection, through viral capture and transmission), or in cis (following DCs productive infection, through the usual CD4-gp120 interaction), thereby inducing a robust infection. In trans infection, bound virions remain infectious over days and it is proposed that they are not degraded, but protected in non-lysosomal acidic organelles within the DCs close to the cell membrane thus contributing to the viral infectious potential during DCs' migration from the periphery to the lymphoid tissues. On arrival at lymphoid tissues, intact virions recycle back to DCs' cell surface allowing virus transmission to CD4+ T-cells. Functionally, acts as a class I viral fusion protein. Under the current model, the protein has at least 3 conformational states: pre-fusion native state, pre-hairpin intermediate state, and post-fusion hairpin state. During fusion of viral and target intracellular membranes, the coiled coil regions (heptad repeats) assume a trimer-of-hairpins structure, positioning the fusion peptide in close proximity to the C-terminal region of the ectodomain. The formation of this structure appears to drive apposition and subsequent fusion of viral and target cell membranes. Complete fusion occurs in host cell endosomes and is dynamin-dependent, however some lipid transfer might occur at the plasma membrane. The virus undergoes clathrin-dependent internalization long before endosomal fusion, thus minimizing the surface exposure of conserved viral epitopes during fusion and reducing the efficacy of inhibitors targeting these epitopes. Membranes fusion leads to delivery of the nucleocapsid into the cytoplasm. The polypeptide is Envelope glycoprotein gp160 (Human immunodeficiency virus type 1 group M subtype D (isolate ELI) (HIV-1)).